Here is a 73-residue protein sequence, read N- to C-terminus: Serine rich endogenous peptide 14 (73 aa).

The first 31 residues, Met1–Ala31, serve as a signal peptide directing secretion. The tract at residues Val44–Pro73 is disordered. An SCOOP motif motif is present at residues Pro59–Pro73. Residues Pro64–Pro73 are compositionally biased toward polar residues. The short motif at Ser65–Ser67 is the SxS motif essential for MIK2 binding element.

The protein belongs to the serine rich endogenous peptide (SCOOP) phytocytokine family. In terms of assembly, interacts with MIK2 (via extracellular leucine-rich repeat domain); this interaction triggers the formation of complex between MIK2 and the BAK1/SERK3 and SERK4 coreceptors, and subsequent BAK1 activation by phosphorylation. As to expression, mostly expressed in seedlings shoots and leaves, and, to a lower extent, in roots, stems, siliques, seeds and flowers.

Its subcellular location is the cell membrane. It localises to the secreted. It is found in the extracellular space. The protein localises to the apoplast. Its function is as follows. Brassicaceae-specific phytocytokine (plant endogenous peptide released into the apoplast) perceived by MIK2 in a BAK1/SERK3 and SERK4 coreceptors-dependent manner, that modulates various physiological and antimicrobial processes including growth prevention and reactive oxygen species (ROS) response regulation. Inhibits root growth and regulates root meristems. Prevents general growth and development. Exhibits antibacterial effects against Pseudomonas syringae pv. tomato DC3000, Ralstonia solanacearum, Bacillus subtilis and Agrobacterium tumefaciens, thus being an antimicrobial peptide (AMP). The chain is Serine rich endogenous peptide 14 from Arabidopsis thaliana (Mouse-ear cress).